A 372-amino-acid polypeptide reads, in one-letter code: Small ribosomal subunit protein mS77 (rPPR2) (372 aa).

A mitochondrion-targeting transit peptide spans 1-28; sequence MKSFLLSRQAIHRISLLSSKTPTFCRNF. The segment at 240–265 is disordered; sequence DNSIRESETVDGEVEEEGFVPSDEVE. Residues 248–257 show a composition bias toward acidic residues; it reads TVDGEVEEEG.

Component of the mitochondrial ribosome small subunit.

Its subcellular location is the mitochondrion. Functionally, required for karyogamy during female gametophyte development, when the two polar nuclei fuse to form the diploid central cell nucleus. This chain is Small ribosomal subunit protein mS77 (rPPR2), found in Arabidopsis thaliana (Mouse-ear cress).